Consider the following 631-residue polypeptide: Chaperone protein HtpG (631 aa).

The interval 1–342 (MSEQTANKET…SNDLPLNVSR (342 aa)) is a; substrate-binding. Residues 343 to 559 (EILQDNKVTQ…DFEMGTQMAK (217 aa)) are b. Residues 560-631 (LLEAAGQAAP…LSAMNQLLAK (72 aa)) are c.

The protein belongs to the heat shock protein 90 family. As to quaternary structure, homodimer.

The protein resides in the cytoplasm. Its function is as follows. Molecular chaperone. Has ATPase activity. The polypeptide is Chaperone protein HtpG (Aliivibrio fischeri (strain ATCC 700601 / ES114) (Vibrio fischeri)).